The following is a 52-amino-acid chain: NADH dehydrogenase [ubiquinone] 1 alpha subcomplex subunit 4 homolog (52 aa).

A helical transmembrane segment spans residues 14–30 (LYPLGAAVATAVGFATY).

The protein belongs to the complex I NDUFA4 subunit family.

The protein resides in the mitochondrion inner membrane. Functionally, accessory subunit of the mitochondrial membrane respiratory chain NADH dehydrogenase (Complex I), that is believed to be not involved in catalysis. Complex I functions in the transfer of electrons from NADH to the respiratory chain. The immediate electron acceptor for the enzyme is believed to be ubiquinone. This chain is NADH dehydrogenase [ubiquinone] 1 alpha subcomplex subunit 4 homolog, found in Schizosaccharomyces pombe (strain 972 / ATCC 24843) (Fission yeast).